We begin with the raw amino-acid sequence, 209 residues long: FMN-dependent NADH:quinone oxidoreductase (209 aa).

Residues serine 9, 19–21 (SVS), and 143–146 (TRGG) each bind FMN.

The protein belongs to the azoreductase type 1 family. In terms of assembly, homodimer. The cofactor is FMN.

It catalyses the reaction 2 a quinone + NADH + H(+) = 2 a 1,4-benzosemiquinone + NAD(+). The enzyme catalyses N,N-dimethyl-1,4-phenylenediamine + anthranilate + 2 NAD(+) = 2-(4-dimethylaminophenyl)diazenylbenzoate + 2 NADH + 2 H(+). Functionally, quinone reductase that provides resistance to thiol-specific stress caused by electrophilic quinones. Its function is as follows. Also exhibits azoreductase activity. Catalyzes the reductive cleavage of the azo bond in aromatic azo compounds to the corresponding amines. The polypeptide is FMN-dependent NADH:quinone oxidoreductase (Leptothrix cholodnii (strain ATCC 51168 / LMG 8142 / SP-6) (Leptothrix discophora (strain SP-6))).